A 71-amino-acid chain; its full sequence is Small ribosomal subunit protein bS21B (71 aa).

It belongs to the bacterial ribosomal protein bS21 family.

In Rhizobium johnstonii (strain DSM 114642 / LMG 32736 / 3841) (Rhizobium leguminosarum bv. viciae), this protein is Small ribosomal subunit protein bS21B.